The sequence spans 417 residues: Putative competence-damage inducible protein (417 aa).

This sequence belongs to the CinA family.

This is Putative competence-damage inducible protein from Oceanobacillus iheyensis (strain DSM 14371 / CIP 107618 / JCM 11309 / KCTC 3954 / HTE831).